Consider the following 521-residue polypeptide: Vascular endothelial zinc finger 1 (521 aa).

A C2H2-type 1 zinc finger spans residues 74-96; sequence FVCTYCSKAFRDSYHLRRHESCH. A compositionally biased stretch (low complexity) spans 140 to 155; the sequence is TTSSSGTNPSSSASTT. The segment at 140–167 is disordered; sequence TTSSSGTNPSSSASTTAMPVTQSVKKPS. 5 C2H2-type zinc fingers span residues 174-196, 202-224, 232-255, 261-283, and 287-308; these read HACE…KLSH, FECP…VRSH, YTCS…KHVH, FKCQ…MVRH, and VSCN…LKTH. An N6-acetyllysine modification is found at K362. Tandem repeats lie at residues 394-400, 445-451, 457-463, and 479-485. The segment at 394–485 is 4 X 7 AA repeats of P-[LV]-T-[IL]-T-[ST]-P; it reads PVTLTTPFSI…IAHPVTITSP (92 aa).

This sequence belongs to the krueppel C2H2-type zinc-finger protein family. In terms of assembly, interacts with ARHGAP22. As to expression, ubiquitously expressed. Highest levels in skeletal muscle and kidney.

The protein resides in the nucleus. Functionally, possible transcription factor. Specifically binds to the CT/GC-rich region of the interleukin-3 promoter and mediates tax transactivation of IL-3. The chain is Vascular endothelial zinc finger 1 (VEZF1) from Homo sapiens (Human).